Here is a 443-residue protein sequence, read N- to C-terminus: Thymidine phosphorylase (443 aa).

Belongs to the thymidine/pyrimidine-nucleoside phosphorylase family. As to quaternary structure, homodimer.

The enzyme catalyses thymidine + phosphate = 2-deoxy-alpha-D-ribose 1-phosphate + thymine. Its pathway is pyrimidine metabolism; dTMP biosynthesis via salvage pathway; dTMP from thymine: step 1/2. Functionally, the enzymes which catalyze the reversible phosphorolysis of pyrimidine nucleosides are involved in the degradation of these compounds and in their utilization as carbon and energy sources, or in the rescue of pyrimidine bases for nucleotide synthesis. In Shewanella oneidensis (strain ATCC 700550 / JCM 31522 / CIP 106686 / LMG 19005 / NCIMB 14063 / MR-1), this protein is Thymidine phosphorylase.